The primary structure comprises 86 residues: MGQNQNKKSIFKGIKISIQLKYKSKNLFLIKKKKKITIRENVNFQNREKLNLMLCFCLIHIHVGGRSPSIQNSFFFFFFFFFFFFF.

A helical membrane pass occupies residues valine 63 to phenylalanine 85.

It localises to the membrane. This is an uncharacterized protein from Dictyostelium discoideum (Social amoeba).